The sequence spans 1256 residues: Muramidase-released protein (1256 aa).

A signal peptide spans 1–47 (MRRSNKKSFDWYGTKQQFSIRKYHFGAASVLLGVSLVLGAGAQVVKA). 2 Small repeats span residues 663-681 (KTTGTVVAGTTTVKYVYEK) and 839-861 (KTDGEENGKVIEGTITVTYVYQK). Disordered stretches follow at residues 873-949 (PETD…VDTP), 967-994 (GNPIAPQEEGTKPNKSIPGYEFTGKTVT), and 1028-1049 (KEPVTDTPTSPEGTPYDTTDNK). One copy of the Large repeat lies at 953–1006 (VPVKKVVTNHVDEEGNPIAPQEEGTKPNKSIPGYEFTGKTVTDEDGNTTHIYKK). Residues 1033–1045 (DTPTSPEGTPYDT) are compositionally biased toward polar residues. The Small repeat unit spans residues 1064–1084 (RVDGTENGKVVEGETVVTYVY). Large repeat units follow at residues 1089 to 1142 (TPAK…IYKK) and 1143 to 1195 (TPAK…IYRK). The disordered stretch occupies residues 1102–1137 (EGNPVAPQEEGTKPNKSIPGYEFTGKTVTDEDGNTT). Residues 1196–1229 (LSNKPTTPEKETPAKPQAGKTASGKAQLPNTGEA) form a disordered region. The short motif at 1223-1227 (LPNTG) is the LPXTG sorting signal element. Thr1226 is modified (pentaglycyl murein peptidoglycan amidated threonine). Positions 1227–1256 (GEASSVAGALGTAMLVATLAFARKRRRNED) are cleaved as a propeptide — removed by sortase.

The protein resides in the secreted. Its subcellular location is the cell wall. The chain is Muramidase-released protein (mrp) from Streptococcus suis.